Here is a 576-residue protein sequence, read N- to C-terminus: Interleukin-1 receptor type 1 (576 aa).

An N-terminal signal peptide occupies residues 1–19 (MENMKVLLGFICLIVPLLS). Ig-like C2-type domains are found at residues 20-115 (LETD…ITMS), 121-217 (PGLC…RVIT), and 229-331 (PVIM…VRLV). Residues 20-338 (LETDKCTEYP…RLVYPVPDFK (319 aa)) are Extracellular-facing. 3 cysteine pairs are disulfide-bonded: C25–C107, C46–C99, and C145–C199. N-linked (GlcNAc...) asparagine glycosylation is found at N63 and N103. N236, N252, and N266 each carry an N-linked (GlcNAc...) asparagine glycan. Residues C251 and C315 are joined by a disulfide bond. The chain crosses the membrane as a helical span at residues 339–359 (NYLIGGFAIFTATAVFCACIY). The Cytoplasmic portion of the chain corresponds to 360–576 (KVFKVDIVLW…LQAETHLPLG (217 aa)). The 156-residue stretch at 386-541 (RTYDAYVLYP…RFWKNLRYQM (156 aa)) folds into the TIR domain. E473 is an active-site residue. Y499 bears the Phosphotyrosine mark. T556 carries the post-translational modification Phosphothreonine; by PKC.

The protein belongs to the interleukin-1 receptor family. The interleukin-1 receptor complex is a heterodimer of IL1R1 and IL1RAP. Interacts with PIK3R1. Interacts with IL1A. Post-translationally, a soluble form (sIL1R1) is probably produced by proteolytic cleavage at the cell surface (shedding). Rapidly phosphorylated on Tyr-499 in response to IL-1, which creates a SH2 binding site for the PI 3-kinase regulatory subunit PIK3R1.

The protein resides in the membrane. It is found in the cell membrane. The protein localises to the secreted. It catalyses the reaction NAD(+) + H2O = ADP-D-ribose + nicotinamide + H(+). Its function is as follows. Receptor for IL1A, IL1B and IL1RN. After binding to interleukin-1 associates with the coreceptor IL1RAP to form the high affinity interleukin-1 receptor complex which mediates interleukin-1-dependent activation of NF-kappa-B, MAPK and other pathways. Signaling involves the recruitment of adapter molecules such as TOLLIP, MYD88, and IRAK1 or IRAK2 via the respective TIR domains of the receptor/coreceptor subunits. Binds ligands with comparable affinity and binding of antagonist IL1RN prevents association with IL1RAP to form a signaling complex. Involved in IL1B-mediated costimulation of IFNG production from T-helper 1 (Th1) cells. The polypeptide is Interleukin-1 receptor type 1 (Il1r1) (Rattus norvegicus (Rat)).